A 67-amino-acid chain; its full sequence is Large ribosomal subunit protein bL35 (67 aa).

A disordered region spans residues 21-50 (KVMCGPGNKRHGLINRPQKMKRTNRGPQTM). Over residues 28-44 (NKRHGLINRPQKMKRTN) the composition is skewed to basic residues.

It belongs to the bacterial ribosomal protein bL35 family.

This is Large ribosomal subunit protein bL35 from Gluconobacter oxydans (strain 621H) (Gluconobacter suboxydans).